Consider the following 299-residue polypeptide: Protein NSG2 (299 aa).

Over 1 to 108 (MANRGEPDPK…PSRTRQTRQN (108 aa)) the chain is Cytoplasmic. Ser-90 carries the post-translational modification Phosphoserine. A helical membrane pass occupies residues 109–129 (ILHYLQAVLILSLSGFAYHEL). Over 130-161 (SRNLHDNHLLHPDFASRPLLLGVKLCNWLSNG) the chain is Lumenal. Residues 162–182 (VLPNWLGYGVEGLLFGSVVPI) traverse the membrane as a helical segment. Residues 183 to 237 (LDNIFQTEVVKSSVHHDSLTSVIRSINAMLGVTFGIRKIQWNSSLQAAGAWGLLN) lie on the Cytoplasmic side of the membrane. Residues 238–258 (IILWLFFDGSISMLMSCICIG) traverse the membrane as a helical segment. The Lumenal portion of the chain corresponds to 259–268 (VGCCISCYKD). The chain crosses the membrane as a helical span at residues 269 to 289 (IIDGSQFLYFMDFYFLGSLMF). At 290–299 (GKLGRYLYSH) the chain is on the cytoplasmic side.

This sequence belongs to the INSIG family.

Its subcellular location is the endoplasmic reticulum membrane. Stabilizes the HMG-CoA reductase HMG2 by preventing its HRD1-dependent degradation. Binds directly to the sterol-sensing domain (SSD)-containing transmembrane region of HMG2, promoting its folding to protect it from degradation. The chain is Protein NSG2 (NSG2) from Saccharomyces cerevisiae (strain ATCC 204508 / S288c) (Baker's yeast).